A 386-amino-acid polypeptide reads, in one-letter code: Succinate--CoA ligase [ADP-forming] subunit beta (386 aa).

The 236-residue stretch at 9 to 244 (KELLKQFGVP…LDEEDPAEIE (236 aa)) folds into the ATP-grasp domain. ATP is bound by residues Lys-46, 53-55 (GRG), Glu-99, Ala-102, and Glu-107. Mg(2+)-binding residues include Asn-199 and Asp-213. Substrate-binding positions include Asn-264 and 321–323 (GIM).

This sequence belongs to the succinate/malate CoA ligase beta subunit family. Heterotetramer of two alpha and two beta subunits. The cofactor is Mg(2+).

It carries out the reaction succinate + ATP + CoA = succinyl-CoA + ADP + phosphate. The enzyme catalyses GTP + succinate + CoA = succinyl-CoA + GDP + phosphate. The protein operates within carbohydrate metabolism; tricarboxylic acid cycle; succinate from succinyl-CoA (ligase route): step 1/1. In terms of biological role, succinyl-CoA synthetase functions in the citric acid cycle (TCA), coupling the hydrolysis of succinyl-CoA to the synthesis of either ATP or GTP and thus represents the only step of substrate-level phosphorylation in the TCA. The beta subunit provides nucleotide specificity of the enzyme and binds the substrate succinate, while the binding sites for coenzyme A and phosphate are found in the alpha subunit. The chain is Succinate--CoA ligase [ADP-forming] subunit beta from Bordetella petrii (strain ATCC BAA-461 / DSM 12804 / CCUG 43448).